The following is a 467-amino-acid chain: Sugar transporter ERD6-like 11 (467 aa).

12 helical membrane passes run 26 to 46, 75 to 95, 105 to 125, 128 to 148, 155 to 177, 183 to 203, 266 to 286, 301 to 321, 328 to 348, 359 to 379, 402 to 422, and 428 to 448; these read ITACVILSTFVAVCSAFSYGC, FLNVGGAVGALFSGQLAVILG, FFCVFGWLSIAFAKNVFWLDL, ISLGIGVGLISYVVPVYIAEI, GAFTASNQLLQNSGVSLIYFFGT, VMAVIGAIPCILQTIGIFFIP, LVVGIGLMLIQQLSGASGITY, LGSMIFGVFVIPKALVGLILV, PLLLASAVGMSIGSLLIGVSF, LIPIFVFVNILVYFGCFAFGI, IVALTSWTSGWFVSYAFNFMF, and GTFYIFAAVGGMSFIFIWMLV.

It belongs to the major facilitator superfamily. Sugar transporter (TC 2.A.1.1) family.

The protein resides in the membrane. Sugar transporter. The sequence is that of Sugar transporter ERD6-like 11 from Arabidopsis thaliana (Mouse-ear cress).